We begin with the raw amino-acid sequence, 429 residues long: MEISDILFDDLVVGEINDDFICVICSHLQVDIYQCVEGHFACKNCFLKMIELKKQCMTCRCEIKSIESLSKNRYLEKEVRKLNIYCPNSFSDLKNSIKDENACKDIITIEGLETHLKNCKFTLKECPNNKNCNDDNKNKECLKIRQGEFDHHLKECPNSLIKCEHCSIEITRSKQTDHIENHCLKVLKQCEFCFKLIERGEFNNHQDTICLSKLIKCPFNEGGCVDLVKRSDIKEHLSVLAGEHLLYSITMINSLSLKLEKSNSELQESISYSRLLKKDFKELKKSKSYSGRWVIEKWSEKLKQYGKGQSIQFQKFNTSTSPSSAFSYFTLRLFPNGQYNGETISIHLVKLFRNKSRISFSFEIENHINPSSNEEIDSRFLFGNLNDYYSTIFYKEYNKENGFISEDDTLVIHFNVEILKYYDDTFITK.

Residues Cys22–Arg60 form an RING-type; degenerate zinc finger. 2 TRAF-type zinc fingers span residues His151–Asn203 and Asn204–Glu265.

Belongs to the TNF receptor-associated factor family.

It is found in the cytoplasm. Its function is as follows. Probable adapter protein and signal transducer that links members of the tumor necrosis factor receptor family to different signaling pathways by association with the receptor cytoplasmic domain and kinases. This chain is TNF receptor-associated factor family protein DDB_G0267744, found in Dictyostelium discoideum (Social amoeba).